Here is a 54-residue protein sequence, read N- to C-terminus: UPF0391 membrane protein BAV1230 (54 aa).

Helical transmembrane passes span 5–25 (AAVFFVIALIAAVLGFGGIAA) and 27–47 (AAGIAKILFFVFLVLALLSVL).

The protein belongs to the UPF0391 family.

It localises to the cell membrane. The sequence is that of UPF0391 membrane protein BAV1230 from Bordetella avium (strain 197N).